The following is a 531-amino-acid chain: SWI/SNF-related matrix-associated actin-dependent regulator of chromatin subfamily D member 2 (531 aa).

A disordered region spans residues 20 to 85 (AVAAALGAPP…MSPGSRMPMA (66 aa)). The segment covering 34-45 (PGMLPNPALRGP) has biased composition (low complexity). 2 positions are modified to asymmetric dimethylarginine: Arg-81 and Arg-104. The segment at 202–226 (FSPSKADGDNSGTAGTPGGTPAADK) is disordered. Ser-203 is subject to Phosphoserine. Thr-217 is modified (phosphothreonine). Lys-226 participates in a covalent cross-link: Glycyl lysine isopeptide (Lys-Gly) (interchain with G-Cter in SUMO2). The region spanning 306-383 (HQPPQYKLDP…PMKLAGLLQH (78 aa)) is the SWIB/MDM2 domain.

The protein belongs to the SMARCD family. Component of the multiprotein chromatin-remodeling complexes SWI/SNF: SWI/SNF-A (BAF), SWI/SNF-B (PBAF) and related complexes. The canonical complex contains a catalytic subunit (either SMARCA4/BRG1/BAF190A or SMARCA2/BRM/BAF190B), and at least SMARCE1, ACTL6A/BAF53, SMARCC1/BAF155, SMARCC2/BAF170, and SMARCB1/SNF5/BAF47. Other subunits specific to each of the complexes may also be present permitting several possible combinations developmentally and tissue specific. Component of the BAF complex, which includes at least actin (ACTB), ARID1A/BAF250A, ARID1B/BAF250B, SMARCA2/BRM, SMARCA4/BRG1, ACTL6A/BAF53, ACTL6B/BAF53B, SMARCE1/BAF57, SMARCC1/BAF155, SMARCC2/BAF170, SMARCB1/SNF5/INI1, and one or more SMARCD1/BAF60A, SMARCD2/BAF60B, or SMARCD3/BAF60C. In muscle cells, the BAF complex also contains DPF3. Component of the SWI/SNF-B (PBAF) chromatin remodeling complex, at least composed of SMARCA4/BRG1, SMARCB1/BAF47/SNF5, ACTL6A/BAF53A or ACTL6B/BAF53B, SMARCE1/BAF57, SMARCD1/BAF60A, SMARCD2/BAF60B, perhaps SMARCD3/BAF60C, SMARCC1/BAF155, SMARCC2/BAF170, PBRM1/BAF180, ARID2/BAF200 and actin (ACTB). Interacts with UNKL. Interacts with CEBPE. In terms of processing, ubiquitinated through a signaling process involving RAC1 and the RING finger protein UNKL.

It is found in the nucleus. Functionally, involved in transcriptional activation and repression of select genes by chromatin remodeling (alteration of DNA-nucleosome topology). Component of SWI/SNF chromatin remodeling complexes that carry out key enzymatic activities, changing chromatin structure by altering DNA-histone contacts within a nucleosome in an ATP-dependent manner. Critical regulator of myeloid differentiation, controlling granulocytopoiesis and the expression of genes involved in neutrophil granule formation. In Rattus norvegicus (Rat), this protein is SWI/SNF-related matrix-associated actin-dependent regulator of chromatin subfamily D member 2 (Smarcd2).